A 405-amino-acid polypeptide reads, in one-letter code: Nicotinate phosphoribosyltransferase (405 aa).

A Phosphohistidine; by autocatalysis modification is found at His224.

Belongs to the NAPRTase family. In terms of processing, transiently phosphorylated on a His residue during the reaction cycle. Phosphorylation strongly increases the affinity for substrates and increases the rate of nicotinate D-ribonucleotide production. Dephosphorylation regenerates the low-affinity form of the enzyme, leading to product release.

It carries out the reaction nicotinate + 5-phospho-alpha-D-ribose 1-diphosphate + ATP + H2O = nicotinate beta-D-ribonucleotide + ADP + phosphate + diphosphate. It participates in cofactor biosynthesis; NAD(+) biosynthesis; nicotinate D-ribonucleotide from nicotinate: step 1/1. Functionally, catalyzes the synthesis of beta-nicotinate D-ribonucleotide from nicotinate and 5-phospho-D-ribose 1-phosphate at the expense of ATP. This chain is Nicotinate phosphoribosyltransferase, found in Methanococcoides burtonii (strain DSM 6242 / NBRC 107633 / OCM 468 / ACE-M).